The chain runs to 2472 residues: Spectrin alpha chain, non-erythrocytic 1 (2472 aa).

Met-1 carries the N-acetylmethionine modification. Spectrin repeat units lie at residues 45–146 (RFQF…IKLL), 150–251 (KLVQ…QGKL), 256–358 (EVQR…ARLD), 361–465 (YRLQ…QYEQ), 468–570 (DLQL…AQLA), 574–676 (HLQQ…KLRE), 679–781 (QQQQ…QKLA), 785–888 (RLQQ…DLED), and 891–961 (QAQQ…QQVA). A Phosphoserine modification is found at Ser-587. Lys-637 is modified (N6-acetyllysine). An N6-acetyllysine modification is found at Lys-803. Residues Ser-924, Ser-982, Ser-999, Ser-1029, Ser-1031, and Ser-1041 each carry the phosphoserine modification. One can recognise an SH3 domain in the interval 967-1026 (TGKELVLALYDYQEKSPREVTMKKGDILTLLNSTNKDWWKVEVNDRQGFVPAAYVKKLDP). The Spectrin 10 repeat unit spans residues 1096-1166 (LFREANELQQ…LESEGLMAEE (71 aa)). Tyr-1176 is modified (phosphotyrosine). Ser-1190, Ser-1207, Ser-1217, Ser-1291, Ser-1306, Ser-1323, and Ser-1338 each carry phosphoserine. The Spectrin 11 repeat unit spans residues 1233–1336 (HEVQRFHRDA…RADQRKAKLG (104 aa)). Spectrin repeat units follow at residues 1339-1441 (HDLQ…RMML) and 1446-1549 (ELQL…KLGE). An N6-acetyllysine modification is found at Lys-1519. Residues Ser-1550, Ser-1557, Ser-1578, Ser-1615, and Ser-1647 each carry the phosphoserine modification. 7 Spectrin repeats span residues 1552–1656 (TLQQ…KLKE), 1659–1762 (KQQN…KLSE), 1764–1868 (HRLH…RLEE), 1871–1974 (EYQQ…KLDE), 1978–2081 (FLQF…KLLE), 2092–2194 (LFLT…LELQ), and 2206–2310 (LRQE…NLEQ). Thr-2020 is subject to Phosphothreonine. Lys-2052 carries the post-translational modification N6-acetyllysine. Thr-2066 carries the phosphothreonine modification. EF-hand domains follow at residues 2323–2358 (EALKEFSMMFKHFDKDKSGRLNHQEFKSCLRSLGYD), 2366–2401 (EPDPEFEAILDTVDPNRDGHVSLQEYMAFMISRETE), and 2404–2439 (KSSEEIESAFRALSSEGKPYVTKEELYQNLTREQAD). 10 residues coordinate Ca(2+): Asp-2336, Asp-2338, Ser-2340, Arg-2342, Glu-2347, Asp-2379, Asn-2381, Asp-2383, His-2385, and Glu-2390. Lys-2421 carries the post-translational modification N6-acetyllysine.

This sequence belongs to the spectrin family. Like erythrocyte spectrin, the spectrin-like proteins are capable of forming dimers which can further associate to tetramers. Interacts (via C-terminal spectrin repeats) with TRPC4. Interacts with CALM and EMD. Interacts with isoform 1 of ACP1. Identified in a complex with ACTN4, CASK, IQGAP1, MAGI2, NPHS1 and SPTBN1. Interacts with SHANK3 (via ANK repeats). Interacts with CLN3; this interaction regulates the fodrin localization at the plasma membrane. In terms of processing, phosphorylation of Tyr-1176 decreases sensitivity to cleavage by calpain in vitro. As to expression, expressed in the foot process layer of podocytes in the kidney glomerulus and in tubules (at protein level).

It is found in the cytoplasm. The protein resides in the cytoskeleton. The protein localises to the cell cortex. In terms of biological role, fodrin, which seems to be involved in secretion, interacts with calmodulin in a calcium-dependent manner and is thus candidate for the calcium-dependent movement of the cytoskeleton at the membrane. This Rattus norvegicus (Rat) protein is Spectrin alpha chain, non-erythrocytic 1 (Sptan1).